A 590-amino-acid polypeptide reads, in one-letter code: DELLA protein GAI1 (590 aa).

Residues 1-10 show a composition bias toward basic residues; that stretch reads MKREYHHPHH. Residues 1–28 form a disordered region; that stretch reads MKREYHHPHHPTCSTSPTGKGKMWDADP. The DELLA motif signature appears at 35-39; that stretch reads DELLA. Residues 153-182 form a disordered region; it reads HIEQPPQQPPAPPLYQRDNKRLKPTTSATA. Residues 205–575 enclose the GRAS domain; the sequence is VDSQETGIRL…RPLIATSAWQ (371 aa). The leucine repeat I (LRI) stretch occupies residues 212-266; that stretch reads IRLVHTLMACAEAVQQENLKLAEALVKQIGFLAVSQAGAMRKVATYFAEGLARRI. Positions 284–349 are VHIID; that stretch reads QMHFYETCPY…GGPPSFRLTG (66 aa). The VHIID motif lies at 315-319; the sequence is VHVID. Positions 363-395 are leucine repeat II (LRII); that stretch reads EVGWKLAQLAETIHVEFEYRGFVANSLADLDAS. The segment at 405–496 is PFYRE; that stretch reads VAVNSVFELH…EVYLGQQICN (92 aa). The LXXLL motif signature appears at 413 to 417; the sequence is LHSLL. The interval 499–575 is SAW; the sequence is ACEGPERVER…RPLIATSAWQ (77 aa).

It belongs to the GRAS family. DELLA subfamily. Post-translationally, phosphorylated. Ubiquitinated. Upon GA application it is ubiquitinated, leading to its subsequent degradation.

It localises to the nucleus. Functionally, probable transcriptional regulator that acts as a repressor of the gibberellin (GA) signaling pathway. Probably acts by participating in large multiprotein complexes that repress transcription of GA-inducible genes. Upon GA application, it is degraded by the proteasome, allowing the GA signaling pathway. This chain is DELLA protein GAI1 (GAI1), found in Vitis vinifera (Grape).